Consider the following 513-residue polypeptide: Acyltransferase uat1 (513 aa).

Residue histidine 158 is the Proton acceptor of the active site.

This sequence belongs to the plant acyltransferase family.

It functions in the pathway secondary metabolite biosynthesis. Acyltransferase; part of the gene cluster that mediates the biosynthesis of the glycolipid biosurfactant ustilagic acid (UA). UA is a secreted cellobiose glycolipid that is toxic for many microorganisms and confers biocontrol activity to U.maydis. UA consists of 15,16-dihydroxypalmitic or 2,15,16-trihydroxypalmitic acid, which is O-glycosidically linked to cellobiose at its terminal hydroxyl group. In addition, the cellobiose moiety is acetylated and acylated with a short-chain hydroxy fatty acid. UA biosynthesis starts with omega-hydroxylation of palmitic acid catalyzed by the cytochrome P450 monooxygenase cyp1. Terminal hydroxylation of palmitic acid precedes subterminal hydroxylation catalyzed by the cytochrome P450 monooxygenase cyp2. Sequential glucosylation of the hydroxy fatty acid is probably catalyzed by the glycosyltransferase ugt1. The cellobiose lipid is further decorated by acetylation of the proximal glucose residue and by acylation with a short-chain beta-hydroxy fatty acid at the distal glucose residue. The acyltransferase uat1 may be a good candidate for catalyzing either acetylation or acylation of the cellobiose lipid. The fatty acid synthase fas2 may be involved in synthesis of the carbon backbone of the short-chain beta-hydroxy fatty acid esterified to the cellobiose disaccharide. The secreted UA consists of a mixture of both alpha-hydroxylated and non-hydroxylated glycolipids; therefore, alpha-hydroxylation of the long-chain fatty, catalyzed by the fatty acid hydroxylase ahd1, occurs late in UA biosynthesis and may be the last step before secretion. The chain is Acyltransferase uat1 from Mycosarcoma maydis (Corn smut fungus).